The following is a 270-amino-acid chain: NADPH-dependent 7-cyano-7-deazaguanine reductase (270 aa).

79–81 contributes to the substrate binding site; sequence IES. 81–82 is a binding site for NADPH; that stretch reads SK. Catalysis depends on cysteine 177, which acts as the Thioimide intermediate. Aspartate 184 (proton donor) is an active-site residue. 216–217 provides a ligand contact to substrate; sequence HE. NADPH is bound at residue 245–246; that stretch reads RG.

The protein belongs to the GTP cyclohydrolase I family. QueF type 2 subfamily. As to quaternary structure, homodimer.

The protein localises to the cytoplasm. It carries out the reaction 7-aminomethyl-7-carbaguanine + 2 NADP(+) = 7-cyano-7-deazaguanine + 2 NADPH + 3 H(+). The protein operates within tRNA modification; tRNA-queuosine biosynthesis. Its function is as follows. Catalyzes the NADPH-dependent reduction of 7-cyano-7-deazaguanine (preQ0) to 7-aminomethyl-7-deazaguanine (preQ1). In Acinetobacter baumannii (strain AB307-0294), this protein is NADPH-dependent 7-cyano-7-deazaguanine reductase.